The chain runs to 445 residues: Hydroxycinnamoyl-CoA:5-hydroxyanthranilate N-hydroxycinnamoyltransferase HHT4 (445 aa).

This sequence belongs to the plant acyltransferase family.

The enzyme catalyses 5-hydroxyanthranilate + (E)-4-coumaroyl-CoA = avenanthramide A + CoA. It catalyses the reaction 5-hydroxyanthranilate + (E)-caffeoyl-CoA = avenanthramide C + CoA. Its function is as follows. Involved in the biosynthesis of avenanthramide phytoalexins, which are phenolic alkaloids found mainly in oats. Catalyzes the N-acylation of 5-hydroxyanthranilate with 4-coumaroyl-CoA or caffeoyl-CoA as acyl donors, forming avenanthramide A and avenanthramide C, respectively. Does not accept feruloyl-CoA as a substrate. In Avena sativa (Oat), this protein is Hydroxycinnamoyl-CoA:5-hydroxyanthranilate N-hydroxycinnamoyltransferase HHT4.